A 216-amino-acid polypeptide reads, in one-letter code: Vascular endothelial growth factor A (216 aa).

A signal peptide spans 1-26 (MNFLLTWIHWGLAALLYFHNAKVLQA). Cystine bridges form between Cys-52/Cys-94, Cys-83/Cys-128, and Cys-87/Cys-130. Residue Asn-101 is glycosylated (N-linked (GlcNAc...) asparagine). Residues 140–161 (QEKKSKREKGKGQKRKRKRGRY) form a disordered region. Positions 145–161 (KREKGKGQKRKRKRGRY) are enriched in basic residues.

It belongs to the PDGF/VEGF growth factor family. In terms of assembly, homodimer; disulfide-linked. Also found as heterodimer with PGF. Interacts to the FLT1/VEGFR1 and KDR/VEGFR2 receptors, heparan sulfate and heparin. Expressed in venom gland, heart, brain, liver, skeletal muscle and kidney.

It is found in the secreted. In terms of biological role, growth factor active in angiogenesis, vasculogenesis and endothelial cell growth. Induces endothelial cell proliferation, promotes cell migration, inhibits apoptosis and induces permeabilization of blood vessels. The sequence is that of Vascular endothelial growth factor A from Protobothrops flavoviridis (Habu).